Reading from the N-terminus, the 142-residue chain is Galactose-6-phosphate isomerase subunit LacA (142 aa).

This sequence belongs to the LacAB/RpiB family. As to quaternary structure, heteromultimeric protein consisting of LacA and LacB.

It catalyses the reaction aldehydo-D-galactose 6-phosphate = keto-D-tagatose 6-phosphate. The protein operates within carbohydrate metabolism; D-galactose 6-phosphate degradation; D-tagatose 6-phosphate from D-galactose 6-phosphate: step 1/1. The protein is Galactose-6-phosphate isomerase subunit LacA of Staphylococcus aureus.